The primary structure comprises 490 residues: GTPase Der (490 aa).

2 EngA-type G domains span residues 1–165 and 227–400; these read MRIA…QIPV and LKVA…TIAT. Residues 7-14, 54-58, 117-120, 233-240, 280-284, and 345-348 each bind GTP; these read GRPNVGKS, DTGGV, NKAD, GHPNVGKS, DTAGL, and NKWD. Residues 401–485 enclose the KH-like domain; it reads TKLSTSLVNK…PFDLEYKAKP (85 aa).

Belongs to the TRAFAC class TrmE-Era-EngA-EngB-Septin-like GTPase superfamily. EngA (Der) GTPase family. As to quaternary structure, associates with the 50S ribosomal subunit.

Its function is as follows. GTPase that plays an essential role in the late steps of ribosome biogenesis. This is GTPase Der from Chlamydia trachomatis serovar A (strain ATCC VR-571B / DSM 19440 / HAR-13).